Reading from the N-terminus, the 84-residue chain is Large ribosomal subunit protein bL27 (84 aa).

A disordered region spans residues 1–22 (MAHKKAGGSTRNGRDSESKRLG).

Belongs to the bacterial ribosomal protein bL27 family.

In Shewanella denitrificans (strain OS217 / ATCC BAA-1090 / DSM 15013), this protein is Large ribosomal subunit protein bL27.